The sequence spans 92 residues: Small ribosomal subunit protein bS20 (92 aa).

The segment at methionine 1–arginine 25 is disordered.

The protein belongs to the bacterial ribosomal protein bS20 family.

In terms of biological role, binds directly to 16S ribosomal RNA. The sequence is that of Small ribosomal subunit protein bS20 from Paraburkholderia phymatum (strain DSM 17167 / CIP 108236 / LMG 21445 / STM815) (Burkholderia phymatum).